Here is a 335-residue protein sequence, read N- to C-terminus: Aliphatic sulfonates import ATP-binding protein SsuB (335 aa).

The disordered stretch occupies residues 48 to 71 (PFASGGAFGRAPRDDDDDRRGAGD). Residues 74-293 (VRLTRVSKRY…ARASAAFAEL (220 aa)) form the ABC transporter domain. 106 to 113 (GRSGCGKS) contacts ATP.

It belongs to the ABC transporter superfamily. Aliphatic sulfonates importer (TC 3.A.1.17.2) family. In terms of assembly, the complex is composed of two ATP-binding proteins (SsuB), two transmembrane proteins (SsuC) and a solute-binding protein (SsuA).

The protein resides in the cell inner membrane. It carries out the reaction ATP + H2O + aliphatic sulfonate-[sulfonate-binding protein]Side 1 = ADP + phosphate + aliphatic sulfonateSide 2 + [sulfonate-binding protein]Side 1.. In terms of biological role, part of the ABC transporter complex SsuABC involved in aliphatic sulfonates import. Responsible for energy coupling to the transport system. The polypeptide is Aliphatic sulfonates import ATP-binding protein SsuB (Burkholderia thailandensis (strain ATCC 700388 / DSM 13276 / CCUG 48851 / CIP 106301 / E264)).